Reading from the N-terminus, the 331-residue chain is Ketol-acid reductoisomerase (NADP(+)) (331 aa).

Positions 2–182 (AKMYYDKDAD…GGTRAGVIET (181 aa)) constitute a KARI N-terminal Rossmann domain. Residues 25-28 (FGSQ), S51, S53, and 83-86 (DEKQ) each bind NADP(+). Residue H108 is part of the active site. G134 contacts NADP(+). Residues 183-328 (TFKEETETDL…KGLREMMAWI (146 aa)) form the KARI C-terminal knotted domain. Mg(2+) is bound by residues D191, E195, E227, and E231. S252 is a binding site for substrate.

Belongs to the ketol-acid reductoisomerase family. The cofactor is Mg(2+).

It catalyses the reaction (2R)-2,3-dihydroxy-3-methylbutanoate + NADP(+) = (2S)-2-acetolactate + NADPH + H(+). The enzyme catalyses (2R,3R)-2,3-dihydroxy-3-methylpentanoate + NADP(+) = (S)-2-ethyl-2-hydroxy-3-oxobutanoate + NADPH + H(+). Its pathway is amino-acid biosynthesis; L-isoleucine biosynthesis; L-isoleucine from 2-oxobutanoate: step 2/4. The protein operates within amino-acid biosynthesis; L-valine biosynthesis; L-valine from pyruvate: step 2/4. In terms of biological role, involved in the biosynthesis of branched-chain amino acids (BCAA). Catalyzes an alkyl-migration followed by a ketol-acid reduction of (S)-2-acetolactate (S2AL) to yield (R)-2,3-dihydroxy-isovalerate. In the isomerase reaction, S2AL is rearranged via a Mg-dependent methyl migration to produce 3-hydroxy-3-methyl-2-ketobutyrate (HMKB). In the reductase reaction, this 2-ketoacid undergoes a metal-dependent reduction by NADPH to yield (R)-2,3-dihydroxy-isovalerate. This Thermoanaerobacter pseudethanolicus (strain ATCC 33223 / 39E) (Clostridium thermohydrosulfuricum) protein is Ketol-acid reductoisomerase (NADP(+)).